Consider the following 934-residue polypeptide: Bifunctional uridylyltransferase/uridylyl-removing enzyme (934 aa).

The segment at 1–379 is uridylyltransferase; that stretch reads MSAHDLKLEE…TFSRRKRKLS (379 aa). The uridylyl-removing stretch occupies residues 380–736; it reads DDGAFISENH…AKPHAFEAVT (357 aa). Residues 496-613 enclose the HD domain; sequence VDEHLLRCIA…IDFADTVQTM (118 aa). 2 ACT domains span residues 737-818 and 848-931; these read EITV…DMLA and VIEV…RSPQ.

This sequence belongs to the GlnD family. Requires Mg(2+) as cofactor.

It catalyses the reaction [protein-PII]-L-tyrosine + UTP = [protein-PII]-uridylyl-L-tyrosine + diphosphate. The catalysed reaction is [protein-PII]-uridylyl-L-tyrosine + H2O = [protein-PII]-L-tyrosine + UMP + H(+). Uridylyltransferase (UTase) activity is inhibited by glutamine, while glutamine activates uridylyl-removing (UR) activity. In terms of biological role, modifies, by uridylylation and deuridylylation, the PII regulatory proteins (GlnB and homologs), in response to the nitrogen status of the cell that GlnD senses through the glutamine level. Under low glutamine levels, catalyzes the conversion of the PII proteins and UTP to PII-UMP and PPi, while under higher glutamine levels, GlnD hydrolyzes PII-UMP to PII and UMP (deuridylylation). Thus, controls uridylylation state and activity of the PII proteins, and plays an important role in the regulation of nitrogen assimilation and metabolism. This is Bifunctional uridylyltransferase/uridylyl-removing enzyme from Brucella suis biovar 1 (strain 1330).